Consider the following 325-residue polypeptide: WUSCHEL-related homeobox 8 (325 aa).

Residues 51–115 constitute a DNA-binding region (homeobox; WUS-type); it reads DPKPRWNPKP…NRKSRAKHKL (65 aa).

It belongs to the WUS homeobox family. Expressed only in the egg cell. Not detected in the pollen tube. Expressed in the zygote, the basal cell, and later the suspensor. Expressed in all suspensor cells, except the hypophysis, and in the embryo surrounding region (ESR) endosperm cells. Strongly expressed in the suspensor cells, with a weak expression also detected throughout the developing embryo.

The protein resides in the nucleus. Functionally, probable transcription factor, which may be involved in embryonic patterning. May be required for basal embryo development after fertilization. Acts partially redundantly with STIP in promoting embryonic cell division and proliferation. Promotes cotyledon boundary formation by maintaining the symmetry in CUC genes expression domains. The polypeptide is WUSCHEL-related homeobox 8 (Arabidopsis thaliana (Mouse-ear cress)).